The sequence spans 1389 residues: DNA-directed RNA polymerase subunit beta (1389 aa).

Belongs to the RNA polymerase beta chain family. In terms of assembly, in plastids the minimal PEP RNA polymerase catalytic core is composed of four subunits: alpha, beta, beta', and beta''. When a (nuclear-encoded) sigma factor is associated with the core the holoenzyme is formed, which can initiate transcription.

It is found in the plastid. The protein resides in the chloroplast. The catalysed reaction is RNA(n) + a ribonucleoside 5'-triphosphate = RNA(n+1) + diphosphate. Its function is as follows. DNA-dependent RNA polymerase catalyzes the transcription of DNA into RNA using the four ribonucleoside triphosphates as substrates. The protein is DNA-directed RNA polymerase subunit beta of Phaeodactylum tricornutum (strain CCAP 1055/1).